The primary structure comprises 304 residues: ATP synthase gamma chain (304 aa).

The protein belongs to the ATPase gamma chain family. In terms of assembly, F-type ATPases have 2 components, CF(1) - the catalytic core - and CF(0) - the membrane proton channel. CF(1) has five subunits: alpha(3), beta(3), gamma(1), delta(1), epsilon(1). CF(0) has three main subunits: a, b and c.

It localises to the cell membrane. Functionally, produces ATP from ADP in the presence of a proton gradient across the membrane. The gamma chain is believed to be important in regulating ATPase activity and the flow of protons through the CF(0) complex. This chain is ATP synthase gamma chain, found in Mycobacterium ulcerans (strain Agy99).